The primary structure comprises 401 residues: Phosrestin-1 (401 aa).

Ser366 carries the post-translational modification Phosphoserine; by CaMK.

It belongs to the arrestin family. Phosphorylated upon light exposure. Expressed in photoreceptor cells.

The protein localises to the cell projection. Its subcellular location is the rhabdomere. Regulates photoreceptor cell deactivation. Arr1 and Arr2 proteins are mediators of rhodopsin inactivation and are essential for the termination of the phototransduction cascade. Involved in regulating normal cycles of per nuclear accumulation in brain circadian neurons and thus is important for normal circadian behavior. In the dark, functions with Arr1 to promote the formation of cytosolic Bdbt foci, which are required for dco localization to photoreceptor nuclei where it phosphorylates and activates degradation of per. The sequence is that of Phosrestin-1 (Arr2) from Drosophila melanogaster (Fruit fly).